The following is a 445-amino-acid chain: UDP-N-acetylmuramoylalanine--D-glutamate ligase (445 aa).

Residue 117–123 (GSNGKTT) coordinates ATP.

This sequence belongs to the MurCDEF family.

It localises to the cytoplasm. The enzyme catalyses UDP-N-acetyl-alpha-D-muramoyl-L-alanine + D-glutamate + ATP = UDP-N-acetyl-alpha-D-muramoyl-L-alanyl-D-glutamate + ADP + phosphate + H(+). The protein operates within cell wall biogenesis; peptidoglycan biosynthesis. In terms of biological role, cell wall formation. Catalyzes the addition of glutamate to the nucleotide precursor UDP-N-acetylmuramoyl-L-alanine (UMA). This chain is UDP-N-acetylmuramoylalanine--D-glutamate ligase, found in Neisseria gonorrhoeae (strain NCCP11945).